The following is a 20-amino-acid chain: Luminal-binding protein (20 aa).

Belongs to the heat shock protein 70 family.

The protein localises to the endoplasmic reticulum lumen. Its function is as follows. Probably plays a role in facilitating the assembly of multimeric protein complexes inside the ER. This Phaseolus vulgaris (Kidney bean) protein is Luminal-binding protein.